Consider the following 204-residue polypeptide: Acyl-homoserine-lactone synthase (204 aa).

The protein belongs to the autoinducer synthase family.

The enzyme catalyses a fatty acyl-[ACP] + S-adenosyl-L-methionine = an N-acyl-L-homoserine lactone + S-methyl-5'-thioadenosine + holo-[ACP] + H(+). Its function is as follows. Required for the synthesis of acyl-HSL autoinducers that bind to SolR. The polypeptide is Acyl-homoserine-lactone synthase (solI) (Ralstonia solanacearum (Pseudomonas solanacearum)).